A 438-amino-acid polypeptide reads, in one-letter code: Trigger factor (438 aa).

The PPIase FKBP-type domain occupies 163–248 (GDKLNIDFEG…VKRIETTEAR (86 aa)).

The protein belongs to the FKBP-type PPIase family. Tig subfamily.

The protein localises to the cytoplasm. It carries out the reaction [protein]-peptidylproline (omega=180) = [protein]-peptidylproline (omega=0). In terms of biological role, involved in protein export. Acts as a chaperone by maintaining the newly synthesized protein in an open conformation. Functions as a peptidyl-prolyl cis-trans isomerase. This chain is Trigger factor, found in Syntrophomonas wolfei subsp. wolfei (strain DSM 2245B / Goettingen).